Here is a 1031-residue protein sequence, read N- to C-terminus: Protein draper (1031 aa).

An N-terminal signal peptide occupies residues methionine 1–alanine 16. Over glutamine 17 to serine 800 the chain is Extracellular. In terms of domain architecture, EMI spans glycine 25–proline 100. Intrachain disulfides connect cysteine 29-cysteine 88, cysteine 55-cysteine 62, cysteine 87-cysteine 98, cysteine 102-cysteine 111, cysteine 106-cysteine 117, and cysteine 119-cysteine 128. N-linked (GlcNAc...) asparagine glycosylation occurs at asparagine 73. 6 EGF-like domains span residues valine 99–aspartate 129, tyrosine 137–alanine 172, phenylalanine 180–aspartate 215, histidine 223–alanine 258, tyrosine 266–phenylalanine 301, and tyrosine 309–alanine 344. The N-linked (GlcNAc...) asparagine glycan is linked to asparagine 140. Intrachain disulfides connect cysteine 141/cysteine 153, cysteine 147/cysteine 160, and cysteine 162/cysteine 171. A glycan (N-linked (GlcNAc...) asparagine) is linked at asparagine 183. Intrachain disulfides connect cysteine 184–cysteine 196, cysteine 190–cysteine 203, cysteine 205–cysteine 214, cysteine 227–cysteine 239, cysteine 233–cysteine 246, cysteine 248–cysteine 257, cysteine 270–cysteine 282, cysteine 276–cysteine 289, and cysteine 291–cysteine 300. Asparagine 312 is a glycosylation site (N-linked (GlcNAc...) asparagine). 3 cysteine pairs are disulfide-bonded: cysteine 313-cysteine 325, cysteine 319-cysteine 332, and cysteine 334-cysteine 343. The N-linked (GlcNAc...) asparagine glycan is linked to asparagine 329. A glycan (N-linked (GlcNAc...) asparagine) is linked at asparagine 358. EGF-like domains follow at residues tyrosine 398–glutamate 433 and phenylalanine 484–glutamate 519. 6 disulfide bridges follow: cysteine 402-cysteine 414, cysteine 408-cysteine 421, cysteine 423-cysteine 432, cysteine 488-cysteine 500, cysteine 494-cysteine 507, and cysteine 509-cysteine 518. Asparagine 418 carries N-linked (GlcNAc...) asparagine glycosylation. Asparagine 504 is a glycosylation site (N-linked (GlcNAc...) asparagine). 3 N-linked (GlcNAc...) asparagine glycosylation sites follow: asparagine 540, asparagine 584, and asparagine 585. The EGF-like 9 domain occupies tyrosine 572–alanine 607. Disulfide bonds link cysteine 576–cysteine 588, cysteine 582–cysteine 595, and cysteine 597–cysteine 606. The N-linked (GlcNAc...) asparagine glycan is linked to asparagine 630. One can recognise an EGF-like 10 domain in the interval tyrosine 660–asparagine 695. 3 disulfides stabilise this stretch: cysteine 664–cysteine 676, cysteine 670–cysteine 683, and cysteine 685–cysteine 694. N-linked (GlcNAc...) asparagine glycans are attached at residues asparagine 695 and asparagine 795. The helical transmembrane segment at valine 801–tyrosine 821 threads the bilayer. Residues tyrosine 822 to lysine 1031 are Cytoplasmic-facing. Basic and acidic residues predominate over residues lysine 940 to tyrosine 954. Disordered stretches follow at residues lysine 940–histidine 964 and threonine 989–lysine 1031. Over residues aspartate 1009–lysine 1031 the composition is skewed to polar residues.

It belongs to the MEGF family. Interacts (via the cytoplasmic domain) with shark; this is required for the recruitment of drpr and glial cells to severed axons and for the phagocytosis of axonal debris by glial cells following axon injury. Interacts with ced-6. In terms of assembly, interacts with csw; this results in dephosphorylation of drpr isoform A which is required for the inhibition of glial cell engulfment of axonal debris produced following axonal injury. In terms of processing, phosphorylated on tyrosine residues. Phosphorylation is induced by binding to prtp. It is also induced by binding to the membrane phospholipid phosphatidylserine. Phosphorylation may be mediated directly or indirectly by Src42a and is required for interaction with shark. Dephosphorylated by csw which is required for the inhibition of glial cell engulfment of axonal debris produced following axonal injury. As to expression, expressed in adult head (at protein level). Expressed in glia, macrophages and ectoderm (at protein level). Detected in glia around the mushroom body dorsal lobe and in glial processes infiltrating the medial lobe (at protein level). Expressed in adult brain glia including antennal lobe glia (at protein level). Expressed in the larval fat body (at protein level). Expressed in the ovary (at protein level). Isoform B: Predominant isoform in adult glia.

Its subcellular location is the cell membrane. The protein localises to the cell projection. The protein resides in the axon. It is found in the cytoplasm. It localises to the postsynaptic cell membrane. Its subcellular location is the cell cortex. The protein localises to the phagocytic cup. The protein resides in the cytoplasmic vesicle. It is found in the phagosome. Receptor which is involved in the phagocytosis of a variety of cells including apoptotic cells, severed and pruned axons, degenerating dendrites, salivary gland cells, germline cells and bacteria. Binds to the ligand prtp which relocates from the endoplasmic reticulum to the cell surface during apoptosis. Ligand-binding may promote tyrosine phosphorylation mediated by Src42a, interaction with shark and subsequent activation of phagocytosis. Also binds to the membrane phospholipid phosphatidylserine which is exposed on the surface of apoptotic cells. Required for the phagocytosis of apoptotic cells by macrophages. Also required for the phagocytosis of apoptotic neurons by glial cells in the embryonic nervous system. Acts downstream of NimC4/simu in the glial phagocytosis of apoptotic neurons. Plays a role in the glial engulfment of larval axons as part of programmed axon pruning during metamorphosis. Also mediates glial cell clearance of severed axons following axonal injury. Required for the engulfment of degenerating dendrites by epidermal cells. Required in the ovary for the engulfment and subsequent processing of dying germline cells by follicular epithelial cells through activation of the JNK/bsk pathway. Plays a role in neuromuscular junction development by mediating the clearance of presynaptic debris and immature boutons which are shed by growing synapses. Required for larval salivary gland cell death which occurs following a rise in steroid levels after puparium formation. Also involved in bacterial phagocytosis. Required for hemocyte phagocytosis of the Gram-positive bacterium S.aureus. Lipoteichoic acid, synthesized by the S.aureus lipoteichoic acid synthase ltaS, acts as a ligand for drpr in this process. Together with Src42a and shark, promotes the migration of macrophages to sites of wounding as part of a signaling cascade where Scr42a detects production of hydrogen peroxide at wound sites which triggers phosphorylation of drpr and subsequent recruitment and activation of shark. Also required for macrophage priming which occurs following phagocytosis of apoptotic cells and ensures that macrophages develop a form of molecular memory that allows them to later mount an inflammatory response to tissue damage and bacterial infection. Is also an essential factor in the regulation of muscle development and myogenesis, and as a consequence is required for normal locomotion. Likely to control the balance between skeletal muscle satellite cells proliferation and differentiation through regulation of the notch signaling pathway. Its function is as follows. Promotes engulfment of axonal debris by glial cells following axonal injury. In terms of biological role, potently inhibits glial cell engulfment of axonal debris produced following axonal injury. This chain is Protein draper, found in Drosophila melanogaster (Fruit fly).